The sequence spans 565 residues: SRSF protein kinase 3 (565 aa).

Residues 1-44 (MSANAGGSGSVDCGGSSSSSQTSCGPESSGSELTPATPAPRLLQ) are disordered. Positions 10 to 31 (SVDCGGSSSSSQTSCGPESSGS) are enriched in low complexity. Phosphoserine is present on Ser49. One can recognise a Protein kinase domain in the interval 78–563 (YHVVRKLGWG…AADCLQHPWL (486 aa)). ATP contacts are provided by residues 84 to 92 (LGWGHFSTV) and Lys107. The Proton acceptor role is filled by Asp211. A compositionally biased stretch (polar residues) spans 236-253 (WQQSGAQPPSRSTVSTAP). Disordered regions lie at residues 236 to 280 (WQQS…KRLL) and 295 to 350 (AAVQ…QTSG). The segment covering 262–277 (SKNKRKKMRRKRKQQK) has biased composition (basic residues). A compositionally biased stretch (low complexity) spans 325–350 (AGPSPASSSPVPGGERSLSPSSQTSG). At Ser328 the chain carries Phosphoserine.

The protein belongs to the protein kinase superfamily. CMGC Ser/Thr protein kinase family. Exclusively expressed in skeletal and heart muscle.

The protein localises to the nucleus. The protein resides in the cytoplasm. It catalyses the reaction L-seryl-[protein] + ATP = O-phospho-L-seryl-[protein] + ADP + H(+). The enzyme catalyses L-threonyl-[protein] + ATP = O-phospho-L-threonyl-[protein] + ADP + H(+). Its function is as follows. Serine/arginine-rich protein-specific kinase which specifically phosphorylates its substrates at serine residues located in regions rich in arginine/serine dipeptides, known as RS domains. Phosphorylates the SR splicing factor SRSF1 and the lamin-B receptor (LBR) in vitro. Required for normal muscle development. This is SRSF protein kinase 3 (Srpk3) from Mus musculus (Mouse).